A 181-amino-acid polypeptide reads, in one-letter code: Der GTPase-activating protein YihI (181 aa).

Positions 1 to 73 are disordered; the sequence is MSRIKKARKP…DPRIGSKKPI (73 aa). The segment covering 22–32 has biased composition (basic and acidic residues); it reads NRTDRDVESRE. A compositionally biased stretch (basic residues) spans 33-42; sequence LKRKRKRKGL. A compositionally biased stretch (basic and acidic residues) spans 55–67; sequence QARRNAQKKDPRI.

This sequence belongs to the YihI family. Interacts with Der.

Functionally, a GTPase-activating protein (GAP) that modifies Der/EngA GTPase function. May play a role in ribosome biogenesis. In Aliivibrio fischeri (strain MJ11) (Vibrio fischeri), this protein is Der GTPase-activating protein YihI.